We begin with the raw amino-acid sequence, 444 residues long: Sonic hedgehog protein (444 aa).

Positions 1-24 (MLVATQSLLLLSFICTLVTPPGLA) are cleaved as a signal peptide. Residue Cys-25 is the site of N-palmitoyl cysteine attachment. Residues 33 to 39 (KRRHPKK) carry the Cardin-Weintraub motif. Ca(2+) is bound by residues Glu-90, Glu-91, Asp-96, Thr-126, Glu-127, Asp-130, and Asp-132. 3 residues coordinate Zn(2+): His-141, Asp-148, and His-183. Gly-198 is lipidated: Cholesterol glycine ester. Tandem repeats lie at residues 386-393 (QVDLQSHH), 394-401 (QVDLQSHH), and 403-409 (VDLQSHH). The tract at residues 386-409 (QVDLQSHHQVDLQSHHQVDLQSHH) is 3 X 8 AA tandem repeats of Q-V-D-L-Q-S-H-H.

This sequence belongs to the hedgehog family. In terms of assembly, interacts with HHATL/GUP1 which negatively regulates HHAT-mediated palmitoylation of the SHH N-terminus. Interacts with BOC and CDON. Interacts with HHIP. Interacts with DISP1 via its cholesterol anchor. Interacts with SCUBE2. Multimer. The C-terminal domain displays an autoproteolysis activity and a cholesterol transferase activity. Both activities result in the cleavage of the full-length protein and covalent attachment of a cholesterol moiety to the C-terminal of the newly generated N-terminal fragment (ShhN). Cholesterylation is required for the sonic hedgehog protein N-product targeting to lipid rafts and multimerization. ShhN is the active species in both local and long-range signaling, whereas the C-product (ShhC) is degraded in the reticulum endoplasmic. Post-translationally, N-palmitoylation by HHAT of ShhN is required for sonic hedgehog protein N-product multimerization and full activity. It is a prerequisite for the membrane-proximal positioning and the subsequent shedding of this N-terminal peptide. In terms of processing, the lipidated N- and C-terminal peptides of ShhNp can be cleaved (shedding). The N-terminal palmitoylated peptide is cleaved at the Cardin-Weintraub (CW) motif site. The cleavage reduced the interactions with heparan sulfate. The cleavage is enhanced by SCUBE2. As to expression, strongly expressed in notochord and neural floor plate during embryogenesis. In tadpole, high expression is observed in pancreas/stomach, moderate expression in tail, and low expression in intestine, brain, and hind limb.

It localises to the endoplasmic reticulum membrane. The protein resides in the golgi apparatus membrane. The protein localises to the cell membrane. The catalysed reaction is glycyl-L-cysteinyl-[protein] + cholesterol + H(+) = [protein]-C-terminal glycyl cholesterol ester + N-terminal L-cysteinyl-[protein]. Its function is as follows. The C-terminal part of the sonic hedgehog protein precursor displays an autoproteolysis and a cholesterol transferase activity. Both activities result in the cleavage of the full-length protein into two parts (ShhN and ShhC) followed by the covalent attachment of a cholesterol moiety to the C-terminal of the newly generated ShhN. Both activities occur in the endoplasmic reticulum. Once cleaved, ShhC is degraded in the endoplasmic reticulum. Functionally, the dually lipidated sonic hedgehog protein N-product (ShhNp) is a morphogen which is essential for a variety of patterning events during development. Induces ventral cell fate in the neural tube and somites. Involved in the patterning of the anterior-posterior axis of the developing limb bud. Essential for axon guidance. Binds to the patched (PTCH1) receptor, which functions in association with smoothened (SMO), to activate the transcription of target genes. In the absence of SHH, PTCH1 represses the constitutive signaling activity of SMO. The protein is Sonic hedgehog protein of Xenopus laevis (African clawed frog).